A 721-amino-acid chain; its full sequence is Transcription activator of gluconeogenesis ARB_05058 (721 aa).

A compositionally biased stretch (polar residues) spans 1–34 (MSPHQTTGQESDNMTVNGENAQASSQYIQSNEEM). The disordered stretch occupies residues 1–62 (MSPHQTTGQE…PSRPKRKKAK (62 aa)). Residues 40–55 (TEKKASTAKAAKDPSR) show a composition bias toward basic and acidic residues. Positions 65–93 (CYACQRGHLTCGDERPCQRCIKRGFQDAC) form a DNA-binding region, zn(2)-C6 fungal-type. Disordered regions lie at residues 128 to 224 (QNNA…FNSA), 263 to 300 (GDTP…SNQA), 353 to 400 (SPAS…TPQL), 533 to 567 (NHNV…YNSS), and 635 to 666 (GLNG…QRRW). Polar residues-rich tracts occupy residues 133-213 (GSNT…TPSA), 267-277 (PSESGAQRGSI), 287-300 (LTGS…SNQA), and 361-379 (MMTT…GAFN). Low complexity-rich tracts occupy residues 380–399 (SRQN…STPQ) and 543–553 (GLMTGSTSRGS). The span at 640–661 (AASNETNELNGSLTNGATTNGR) shows a compositional bias: polar residues.

It belongs to the ERT1/acuK family.

It localises to the nucleus. In terms of biological role, transcription factor which regulates nonfermentable carbon utilization. Activator of gluconeogenetic genes. In Arthroderma benhamiae (strain ATCC MYA-4681 / CBS 112371) (Trichophyton mentagrophytes), this protein is Transcription activator of gluconeogenesis ARB_05058.